A 306-amino-acid polypeptide reads, in one-letter code: Ubiquitin carboxyl-terminal hydrolase RPN11 (306 aa).

The residue at position 1 (Met-1) is an N-acetylmethionine. A disordered region spans residues 1-20 (MERLQRLMMNSKVGSADTGR). An MPN domain is found at 27 to 162 (VYISSIALLK…IDAFRLIDTG (136 aa)). His-109, His-111, and Asp-122 together coordinate Zn(2+). Residues 109-122 (HSHPGFGCWLSSVD) carry the JAMM motif motif.

It belongs to the peptidase M67A family. In terms of assembly, component of the lid subcomplex of the 19S proteasome regulatory particle complex (also named PA700 complex). The 26S proteasome consists of a 20S proteasome core and two 19S regulatory subunits. Interacts directly with RPN8 and STS1. N-acetylated by NAT3.

It catalyses the reaction Thiol-dependent hydrolysis of ester, thioester, amide, peptide and isopeptide bonds formed by the C-terminal Gly of ubiquitin (a 76-residue protein attached to proteins as an intracellular targeting signal).. Component of the lid subcomplex of the 26S proteasome, a multiprotein complex involved in the ATP-dependent degradation of ubiquitinated proteins. RPN11 is the only catalytically active member of the lid and serves as the essential deubiquitinase of the proteasome. In Saccharomyces cerevisiae (strain ATCC 204508 / S288c) (Baker's yeast), this protein is Ubiquitin carboxyl-terminal hydrolase RPN11 (RPN11).